A 211-amino-acid polypeptide reads, in one-letter code: Ribosomal RNA small subunit methyltransferase G (211 aa).

S-adenosyl-L-methionine-binding residues include Gly-73, Phe-78, and Arg-141.

Belongs to the methyltransferase superfamily. RNA methyltransferase RsmG family.

The protein resides in the cytoplasm. It catalyses the reaction guanosine(527) in 16S rRNA + S-adenosyl-L-methionine = N(7)-methylguanosine(527) in 16S rRNA + S-adenosyl-L-homocysteine. In terms of biological role, specifically methylates the N7 position of guanine in position 527 of 16S rRNA. The polypeptide is Ribosomal RNA small subunit methyltransferase G (Jannaschia sp. (strain CCS1)).